The primary structure comprises 531 residues: Acetate CoA-transferase YdiF (531 aa).

The active-site 5-glutamyl coenzyme A thioester intermediate is the E333.

This sequence belongs to the 3-oxoacid CoA-transferase family. As to quaternary structure, homotetramer; dimer of dimers.

The enzyme catalyses an acyl-CoA + acetate = a carboxylate + acetyl-CoA. In terms of biological role, coA transferase having broad substrate specificity for short-chain acyl-CoA thioesters with the activity decreasing when the length of the carboxylic acid chain exceeds four carbons. May play a role in short-chain fatty acid metabolism in E.coli. In Escherichia coli (strain K12), this protein is Acetate CoA-transferase YdiF (ydiF).